Reading from the N-terminus, the 169-residue chain is Putative esterase F42H10.6 (169 aa).

Belongs to the thioesterase paaI family.

The chain is Putative esterase F42H10.6 from Caenorhabditis elegans.